Here is a 433-residue protein sequence, read N- to C-terminus: FAD-dependent monooxygenase notI' (433 aa).

2 residues coordinate FAD: Glu-45 and Arg-117. Residue Arg-195 is part of the active site. Positions 314 and 327 each coordinate FAD.

It belongs to the paxM FAD-dependent monooxygenase family. The cofactor is FAD.

Its pathway is alkaloid biosynthesis. Functionally, FAD-dependent monooxygenase; part of the gene cluster that mediates the biosynthesis of notoamide, a fungal indole alkaloid that belongs to a family of natural products containing a characteristic bicyclo[2.2.2]diazaoctane core. The first step of notoamide biosynthesis involves coupling of L-proline and L-tryptophan by the bimodular NRPS notE', to produce cyclo-L-tryptophan-L-proline called brevianamide F. The reverse prenyltransferase notF' then acts as a deoxybrevianamide E synthase and converts brevianamide F to deoxybrevianamide E via reverse prenylation at C-2 of the indole ring leading to the bicyclo[2.2.2]diazaoctane core. Deoxybrevianamide E is further hydroxylated at C-6 of the indole ring, likely catalyzed by the cytochrome P450 monooxygenase notG', to yield 6-hydroxy-deoxybrevianamide E. 6-hydroxy-deoxybrevianamide E is a specific substrate of the prenyltransferase notC' for normal prenylation at C-7 to produce 6-hydroxy-7-prenyl-deoxybrevianamide, also called notoamide S. As the proposed pivotal branching point in notoamide biosynthesis, notoamide S can be diverted to notoamide E through an oxidative pyran ring closure putatively catalyzed by either notH' cytochrome P450 monooxygenase or the notD' FAD-linked oxidoreductase. This step would be followed by an indole 2,3-epoxidation-initiated pinacol-like rearrangement catalyzed by the notB' FAD-dependent monooxygenase leading to the formation of notoamide C and notoamide D. On the other hand notoamide S is converted to notoamide T by notH' (or notD'), a bifunctional oxidase that also functions as the intramolecular Diels-Alderase responsible for generation of (-)-notoamide T. To generate antipodal (+)-notoaminide T, notH (or notD) in Aspergillus strain MF297-2 is expected to catalyze a Diels-Alder reaction leading to the opposite stereochemistry. The remaining oxidoreductase notD' (or notH') likely catalyzes the oxidative pyran ring formation to yield (-)-stephacidin A. The FAD-dependent monooxygenase notI' is highly similar to notB' and is predicted to catalyze a similar conversion from (-)-stephacidin A to (+)-notoamide B via the 2,3-epoxidation of (-)-stephacidin A followed by a pinacol-type rearrangement. Finally, it remains unclear which enzyme could be responsible for the final hydroxylation steps leading to notoamide A and sclerotiamide. The chain is FAD-dependent monooxygenase notI' from Aspergillus versicolor.